Here is a 211-residue protein sequence, read N- to C-terminus: Urease accessory protein UreG (211 aa).

G8–T15 serves as a coordination point for GTP.

It belongs to the SIMIBI class G3E GTPase family. UreG subfamily. Homodimer. UreD, UreF and UreG form a complex that acts as a GTP-hydrolysis-dependent molecular chaperone, activating the urease apoprotein by helping to assemble the nickel containing metallocenter of UreC. The UreE protein probably delivers the nickel.

It is found in the cytoplasm. Its function is as follows. Facilitates the functional incorporation of the urease nickel metallocenter. This process requires GTP hydrolysis, probably effectuated by UreG. The protein is Urease accessory protein UreG of Metallosphaera sedula (strain ATCC 51363 / DSM 5348 / JCM 9185 / NBRC 15509 / TH2).